Reading from the N-terminus, the 230-residue chain is Ribosomal RNA large subunit methyltransferase E (230 aa).

S-adenosyl-L-methionine-binding residues include G82, W84, D100, D116, and D140. K180 serves as the catalytic Proton acceptor.

The protein belongs to the class I-like SAM-binding methyltransferase superfamily. RNA methyltransferase RlmE family.

The protein resides in the cytoplasm. It carries out the reaction uridine(2552) in 23S rRNA + S-adenosyl-L-methionine = 2'-O-methyluridine(2552) in 23S rRNA + S-adenosyl-L-homocysteine + H(+). Its function is as follows. Specifically methylates the uridine in position 2552 of 23S rRNA at the 2'-O position of the ribose in the fully assembled 50S ribosomal subunit. The chain is Ribosomal RNA large subunit methyltransferase E from Granulibacter bethesdensis (strain ATCC BAA-1260 / CGDNIH1).